A 102-amino-acid polypeptide reads, in one-letter code: Small ribosomal subunit protein uS10 (102 aa).

This sequence belongs to the universal ribosomal protein uS10 family. In terms of assembly, part of the 30S ribosomal subunit.

In terms of biological role, involved in the binding of tRNA to the ribosomes. In Nocardioides sp. (strain ATCC BAA-499 / JS614), this protein is Small ribosomal subunit protein uS10.